Consider the following 60-residue polypeptide: Arabinogalactan protein 12 (60 aa).

Positions 1 to 27 (MESMKMKLIVVLMVAIVAFSAVGNVAA) are cleaved as a signal peptide. Gln-28 is subject to Pyrrolidone carboxylic acid. Residues Pro-32, Pro-34, and Pro-36 each carry the 4-hydroxyproline modification. 3 O-linked (Ara...) hydroxyproline glycosylation sites follow: Pro-32, Pro-34, and Pro-36. Ser-38 is lipidated: GPI-anchor amidated serine. Residues 39–60 (DAAMFVPALFASVAALASGFLF) constitute a propeptide, removed in mature form.

Belongs to the AG-peptide AGP family. Contains 4-hydroxyproline; hydroxylated on Pro-32, Pro-34 and Pro-36. Post-translationally, O-glycosylated on hydroxyprolines; noncontiguous hydroxylproline residues are glycosylated with arabinogalactan. Expressed in reproductive tissues. Expressed in chalaza, funiculus, stigma, septum, style and transmitting tract.

It is found in the cell membrane. Its function is as follows. Proteoglycan that seems to be implicated in diverse developmental roles such as differentiation, cell-cell recognition, embryogenesis and programmed cell death. This Arabidopsis thaliana (Mouse-ear cress) protein is Arabinogalactan protein 12.